The following is a 370-amino-acid chain: NSFL1 cofactor p47 (370 aa).

The interval 54–73 (SQATPSSVSRGTAPSDNRVT) is disordered. Phosphoserine occurs at positions 74, 102, and 114. Disordered regions lie at residues 80–116 (HDQDEDEEEEEGQRFYAGGSERSGQQIVGPPRKRSPN) and 137–157 (VTKSPGETSKPRPFAGGGYRL). The short motif at 109–115 (PPRKRSP) is the Nuclear localization signal element. Ser-140 bears the Phosphoserine; by CDK1 mark. Phosphotyrosine is present on Tyr-167. The Nuclear localization signal motif lies at 172–175 (RRRH). Phosphoserine occurs at positions 176, 192, and 272. The 66-residue stretch at 179 to 244 (DVHVVLKLWK…MEDHRDEDFV (66 aa)) folds into the SEP domain. Positions 272 to 292 (SPAQQAENEAKASSSISIDES) are disordered. Positions 291-368 (ESQPTTNIQI…NLLNAVIVQR (78 aa)) constitute a UBX domain.

As to quaternary structure, part of a ternary complex containing STX5A, NSFL1C and VCP. NSFL1C forms a homotrimer that binds to one end of a VCP homohexamer. The complex binds to membranes enriched in phosphatidylethanolamine-containing lipids and promotes Golgi membrane fusion. Interaction with VCIP135 leads to dissociation of the complex via ATP hydrolysis by VCP. Binds ubiquitin and mono-ubiquitinated proteins via its N-terminal UBA-like domain when bound to VCP. In terms of processing, phosphorylated during mitosis. Phosphorylation inhibits interaction with Golgi membranes and is required for the fragmentation of the Golgi stacks during mitosis.

Its subcellular location is the nucleus. It is found in the golgi apparatus. It localises to the golgi stack. The protein resides in the chromosome. The protein localises to the cytoplasm. Its subcellular location is the cytoskeleton. It is found in the microtubule organizing center. It localises to the centrosome. Reduces the ATPase activity of VCP. Necessary for the fragmentation of Golgi stacks during mitosis and for VCP-mediated reassembly of Golgi stacks after mitosis. May play a role in VCP-mediated formation of transitional endoplasmic reticulum (tER). Inhibits the activity of CTSL (in vitro). Together with UBXN2B/p37, regulates the centrosomal levels of kinase AURKA/Aurora A during mitotic progression by promoting AURKA removal from centrosomes in prophase. Also, regulates spindle orientation during mitosis. This chain is NSFL1 cofactor p47 (NSFL1C), found in Bos taurus (Bovine).